We begin with the raw amino-acid sequence, 486 residues long: UDP-N-acetylmuramoyl-L-alanyl-D-glutamate--2,6-diaminopimelate ligase (486 aa).

Ser33 contributes to the UDP-N-acetyl-alpha-D-muramoyl-L-alanyl-D-glutamate binding site. 110–116 (GTNGKTS) contacts ATP. Residues 152 to 153 (TT), Ser179, Gln185, and Arg187 each bind UDP-N-acetyl-alpha-D-muramoyl-L-alanyl-D-glutamate. Residue Lys219 is modified to N6-carboxylysine. Meso-2,6-diaminopimelate is bound by residues Arg383, 407-410 (DNPR), Gly455, and Glu459. The Meso-diaminopimelate recognition motif motif lies at 407–410 (DNPR).

It belongs to the MurCDEF family. MurE subfamily. It depends on Mg(2+) as a cofactor. In terms of processing, carboxylation is probably crucial for Mg(2+) binding and, consequently, for the gamma-phosphate positioning of ATP.

The protein resides in the cytoplasm. The enzyme catalyses UDP-N-acetyl-alpha-D-muramoyl-L-alanyl-D-glutamate + meso-2,6-diaminopimelate + ATP = UDP-N-acetyl-alpha-D-muramoyl-L-alanyl-gamma-D-glutamyl-meso-2,6-diaminopimelate + ADP + phosphate + H(+). The protein operates within cell wall biogenesis; peptidoglycan biosynthesis. Functionally, catalyzes the addition of meso-diaminopimelic acid to the nucleotide precursor UDP-N-acetylmuramoyl-L-alanyl-D-glutamate (UMAG) in the biosynthesis of bacterial cell-wall peptidoglycan. This is UDP-N-acetylmuramoyl-L-alanyl-D-glutamate--2,6-diaminopimelate ligase from Zymomonas mobilis subsp. mobilis (strain ATCC 31821 / ZM4 / CP4).